The sequence spans 129 residues: Small ribosomal subunit protein uS11 (129 aa).

This sequence belongs to the universal ribosomal protein uS11 family. As to quaternary structure, part of the 30S ribosomal subunit. Interacts with proteins S7 and S18. Binds to IF-3.

Located on the platform of the 30S subunit, it bridges several disparate RNA helices of the 16S rRNA. Forms part of the Shine-Dalgarno cleft in the 70S ribosome. The protein is Small ribosomal subunit protein uS11 of Aeromonas hydrophila subsp. hydrophila (strain ATCC 7966 / DSM 30187 / BCRC 13018 / CCUG 14551 / JCM 1027 / KCTC 2358 / NCIMB 9240 / NCTC 8049).